The primary structure comprises 147 residues: D-aminoacyl-tRNA deacylase (147 aa).

Residues 136–137 carry the Gly-cisPro motif, important for rejection of L-amino acids motif; it reads GP.

This sequence belongs to the DTD family. Homodimer.

It is found in the cytoplasm. It carries out the reaction glycyl-tRNA(Ala) + H2O = tRNA(Ala) + glycine + H(+). It catalyses the reaction a D-aminoacyl-tRNA + H2O = a tRNA + a D-alpha-amino acid + H(+). In terms of biological role, an aminoacyl-tRNA editing enzyme that deacylates mischarged D-aminoacyl-tRNAs. Also deacylates mischarged glycyl-tRNA(Ala), protecting cells against glycine mischarging by AlaRS. Acts via tRNA-based rather than protein-based catalysis; rejects L-amino acids rather than detecting D-amino acids in the active site. By recycling D-aminoacyl-tRNA to D-amino acids and free tRNA molecules, this enzyme counteracts the toxicity associated with the formation of D-aminoacyl-tRNA entities in vivo and helps enforce protein L-homochirality. The protein is D-aminoacyl-tRNA deacylase of Streptococcus agalactiae serotype III (strain NEM316).